The chain runs to 290 residues: Small ribosomal subunit biogenesis GTPase RsgA (290 aa).

Residues 62–213 form the CP-type G domain; sequence KNSLVRPPIV…IADTPGFSSL (152 aa). GTP contacts are provided by residues 111–114 and 156–164; these read SKLD and GQTGVGKST. Zn(2+) is bound by residues cysteine 237, cysteine 242, histidine 244, and cysteine 250.

This sequence belongs to the TRAFAC class YlqF/YawG GTPase family. RsgA subfamily. In terms of assembly, monomer. Associates with 30S ribosomal subunit, binds 16S rRNA. Requires Zn(2+) as cofactor.

Its subcellular location is the cytoplasm. Functionally, one of several proteins that assist in the late maturation steps of the functional core of the 30S ribosomal subunit. Helps release RbfA from mature subunits. May play a role in the assembly of ribosomal proteins into the subunit. Circularly permuted GTPase that catalyzes slow GTP hydrolysis, GTPase activity is stimulated by the 30S ribosomal subunit. This is Small ribosomal subunit biogenesis GTPase RsgA from Streptococcus agalactiae serotype III (strain NEM316).